Here is a 1237-residue protein sequence, read N- to C-terminus: Cilia- and flagella-associated protein 61 (1237 aa).

The tract at residues 278–301 is disordered; it reads QDLSVRRSQDAELRSSSQGSQKIV. Residues 281 to 290 are compositionally biased toward basic and acidic residues; the sequence is SVRRSQDAEL.

In terms of assembly, component of axonemal radial spokes, the protein complexes that link the outer microtubule doublets with the central pair of microtubules. Interacts with CFAP91/MAATS1, ODAD2/ARMC4, RSPH3A, ROPN1, ROPN1L and RSPH9. Interacts with DYNLT1, DYNC1I2 and TUBB3. Interacts with WDR35, IFT22 and IFT81.

The protein resides in the cytoplasm. It is found in the cytoskeleton. The protein localises to the flagellum axoneme. In terms of biological role, involved in sperm flagellum assembly. Plays an essential role in the formation of the radial spokes in flagellum axoneme. In Homo sapiens (Human), this protein is Cilia- and flagella-associated protein 61.